The chain runs to 127 residues: Large ribosomal subunit protein bL12 (127 aa).

The protein belongs to the bacterial ribosomal protein bL12 family. In terms of assembly, homodimer. Part of the ribosomal stalk of the 50S ribosomal subunit. Forms a multimeric L10(L12)X complex, where L10 forms an elongated spine to which 2 to 4 L12 dimers bind in a sequential fashion. Binds GTP-bound translation factors.

Forms part of the ribosomal stalk which helps the ribosome interact with GTP-bound translation factors. Is thus essential for accurate translation. The sequence is that of Large ribosomal subunit protein bL12 from Syntrophotalea carbinolica (strain DSM 2380 / NBRC 103641 / GraBd1) (Pelobacter carbinolicus).